A 137-amino-acid polypeptide reads, in one-letter code: MSENQDLQKSFLETVKFDDKGLVPAIVQDFETGKVLMMAWMNRQSLEMTLEKKKACYWSRSRQKLWLKGESSGNMQNVHDILIDCDGDTLLLKVSQTGGACHMGYQSCFYRKTKDDLSMEICDTLMFNPEDVYGKQS.

Residue Asp84 participates in Mg(2+) binding. Position 85 (Cys85) interacts with Zn(2+). Asp86 and Asp88 together coordinate Mg(2+). Positions 101 and 108 each coordinate Zn(2+).

It belongs to the PRA-CH family. Homodimer. Mg(2+) is required as a cofactor. It depends on Zn(2+) as a cofactor.

The protein resides in the cytoplasm. The catalysed reaction is 1-(5-phospho-beta-D-ribosyl)-5'-AMP + H2O = 1-(5-phospho-beta-D-ribosyl)-5-[(5-phospho-beta-D-ribosylamino)methylideneamino]imidazole-4-carboxamide. It functions in the pathway amino-acid biosynthesis; L-histidine biosynthesis; L-histidine from 5-phospho-alpha-D-ribose 1-diphosphate: step 3/9. Catalyzes the hydrolysis of the adenine ring of phosphoribosyl-AMP. The sequence is that of Phosphoribosyl-AMP cyclohydrolase from Prosthecochloris aestuarii (strain DSM 271 / SK 413).